A 205-amino-acid polypeptide reads, in one-letter code: High frequency lysogenization protein HflD homolog (205 aa).

The protein belongs to the HflD family.

It localises to the cytoplasm. Its subcellular location is the cell inner membrane. The protein is High frequency lysogenization protein HflD homolog of Shewanella baltica (strain OS223).